The sequence spans 1204 residues: Integrator complex subunit 2 (1204 aa).

A helical transmembrane segment spans residues 428 to 444 (FVSLSFCMLLAFSTLVS).

Belongs to the Integrator subunit 2 family. As to quaternary structure, component of the Integrator complex, composed of core subunits INTS1, INTS2, INTS3, INTS4, INTS5, INTS6, INTS7, INTS8, INTS9/RC74, INTS10, INTS11/CPSF3L, INTS12, INTS13, INTS14 and INTS15. The core complex associates with protein phosphatase 2A subunits PPP2CA and PPP2R1A, to form the Integrator-PP2A (INTAC) complex.

It localises to the nucleus. It is found in the nucleus membrane. The protein localises to the cytoplasm. In terms of biological role, component of the integrator complex, a multiprotein complex that terminates RNA polymerase II (Pol II) transcription in the promoter-proximal region of genes. The integrator complex provides a quality checkpoint during transcription elongation by driving premature transcription termination of transcripts that are unfavorably configured for transcriptional elongation: the complex terminates transcription by (1) catalyzing dephosphorylation of the C-terminal domain (CTD) of Pol II subunit POLR2A/RPB1 and SUPT5H/SPT5, (2) degrading the exiting nascent RNA transcript via endonuclease activity and (3) promoting the release of Pol II from bound DNA. The integrator complex is also involved in terminating the synthesis of non-coding Pol II transcripts, such as enhancer RNAs (eRNAs), small nuclear RNAs (snRNAs), telomerase RNAs and long non-coding RNAs (lncRNAs). Mediates recruitment of cytoplasmic dynein to the nuclear envelope, probably as component of the integrator complex. This Homo sapiens (Human) protein is Integrator complex subunit 2.